The following is a 205-amino-acid chain: Holliday junction branch migration complex subunit RuvA (205 aa).

Residues 1–64 (MIGRLKGILI…ENLHQLFGFA (64 aa)) are domain I. Residues 65 to 143 (EQRDRSLFRT…NWDLPQGDML (79 aa)) form a domain II region. A flexible linker region spans residues 144–153 (AHGEIQAIAS). Residues 153–205 (SDNDIYAEAESALIALGYKPVDAAKMVASAAKQKPEARSEELIRIALRSLAGV) form a domain III region.

The protein belongs to the RuvA family. As to quaternary structure, homotetramer. Forms an RuvA(8)-RuvB(12)-Holliday junction (HJ) complex. HJ DNA is sandwiched between 2 RuvA tetramers; dsDNA enters through RuvA and exits via RuvB. An RuvB hexamer assembles on each DNA strand where it exits the tetramer. Each RuvB hexamer is contacted by two RuvA subunits (via domain III) on 2 adjacent RuvB subunits; this complex drives branch migration. In the full resolvosome a probable DNA-RuvA(4)-RuvB(12)-RuvC(2) complex forms which resolves the HJ.

Its subcellular location is the cytoplasm. The RuvA-RuvB-RuvC complex processes Holliday junction (HJ) DNA during genetic recombination and DNA repair, while the RuvA-RuvB complex plays an important role in the rescue of blocked DNA replication forks via replication fork reversal (RFR). RuvA specifically binds to HJ cruciform DNA, conferring on it an open structure. The RuvB hexamer acts as an ATP-dependent pump, pulling dsDNA into and through the RuvAB complex. HJ branch migration allows RuvC to scan DNA until it finds its consensus sequence, where it cleaves and resolves the cruciform DNA. In Cellvibrio japonicus (strain Ueda107) (Pseudomonas fluorescens subsp. cellulosa), this protein is Holliday junction branch migration complex subunit RuvA.